Reading from the N-terminus, the 290-residue chain is Acetyl-coenzyme A carboxylase carboxyl transferase subunit beta (290 aa).

A CoA carboxyltransferase N-terminal domain is found at 28 to 290 (IMTKCPKCKK…SRGGDEWHTN (263 aa)). Zn(2+) contacts are provided by Cys-32, Cys-35, Cys-51, and Cys-54. The C4-type zinc-finger motif lies at 32–54 (CPKCKKIMYTKELVKNLRVCISC).

The protein belongs to the AccD/PCCB family. As to quaternary structure, acetyl-CoA carboxylase is a heterohexamer composed of biotin carboxyl carrier protein (AccB), biotin carboxylase (AccC) and two subunits each of ACCase subunit alpha (AccA) and ACCase subunit beta (AccD). Requires Zn(2+) as cofactor.

It localises to the cytoplasm. It catalyses the reaction N(6)-carboxybiotinyl-L-lysyl-[protein] + acetyl-CoA = N(6)-biotinyl-L-lysyl-[protein] + malonyl-CoA. Its pathway is lipid metabolism; malonyl-CoA biosynthesis; malonyl-CoA from acetyl-CoA: step 1/1. Its function is as follows. Component of the acetyl coenzyme A carboxylase (ACC) complex. Biotin carboxylase (BC) catalyzes the carboxylation of biotin on its carrier protein (BCCP) and then the CO(2) group is transferred by the transcarboxylase to acetyl-CoA to form malonyl-CoA. The protein is Acetyl-coenzyme A carboxylase carboxyl transferase subunit beta of Anoxybacillus flavithermus (strain DSM 21510 / WK1).